A 124-amino-acid polypeptide reads, in one-letter code: MAKLTKESFIQSLKEMNIKEVMELVNAMKEEFGIDPSAVVVAGGAAGGAEVAEKTEVTITLKNAGGNKVPVIKKVREISPELSLMDAKKLVDSAPAKLKDNVKPEEAEEIKAAFAALGAEISID.

Belongs to the bacterial ribosomal protein bL12 family. In terms of assembly, homodimer. Part of the ribosomal stalk of the 50S ribosomal subunit. Forms a multimeric L10(L12)X complex, where L10 forms an elongated spine to which 2 to 4 L12 dimers bind in a sequential fashion. Binds GTP-bound translation factors.

Its function is as follows. Forms part of the ribosomal stalk which helps the ribosome interact with GTP-bound translation factors. Is thus essential for accurate translation. This is Large ribosomal subunit protein bL12 from Mycoplasma mobile (strain ATCC 43663 / 163K / NCTC 11711) (Mesomycoplasma mobile).